The chain runs to 219 residues: Ribose-5-phosphate isomerase A (219 aa).

Residues 29-32, 82-85, and 95-98 contribute to the substrate site; these read TGST, DGAD, and KGGG. The active-site Proton acceptor is Glu-104. Lys-122 contributes to the substrate binding site.

It belongs to the ribose 5-phosphate isomerase family. Homodimer.

The catalysed reaction is aldehydo-D-ribose 5-phosphate = D-ribulose 5-phosphate. The protein operates within carbohydrate degradation; pentose phosphate pathway; D-ribose 5-phosphate from D-ribulose 5-phosphate (non-oxidative stage): step 1/1. Functionally, catalyzes the reversible conversion of ribose-5-phosphate to ribulose 5-phosphate. This chain is Ribose-5-phosphate isomerase A, found in Chromobacterium violaceum (strain ATCC 12472 / DSM 30191 / JCM 1249 / CCUG 213 / NBRC 12614 / NCIMB 9131 / NCTC 9757 / MK).